The chain runs to 475 residues: Aspartyl/glutamyl-tRNA(Asn/Gln) amidotransferase subunit B (475 aa).

The protein belongs to the GatB/GatE family. GatB subfamily. Heterotrimer of A, B and C subunits.

It catalyses the reaction L-glutamyl-tRNA(Gln) + L-glutamine + ATP + H2O = L-glutaminyl-tRNA(Gln) + L-glutamate + ADP + phosphate + H(+). The enzyme catalyses L-aspartyl-tRNA(Asn) + L-glutamine + ATP + H2O = L-asparaginyl-tRNA(Asn) + L-glutamate + ADP + phosphate + 2 H(+). In terms of biological role, allows the formation of correctly charged Asn-tRNA(Asn) or Gln-tRNA(Gln) through the transamidation of misacylated Asp-tRNA(Asn) or Glu-tRNA(Gln) in organisms which lack either or both of asparaginyl-tRNA or glutaminyl-tRNA synthetases. The reaction takes place in the presence of glutamine and ATP through an activated phospho-Asp-tRNA(Asn) or phospho-Glu-tRNA(Gln). The protein is Aspartyl/glutamyl-tRNA(Asn/Gln) amidotransferase subunit B of Bacillus cereus (strain G9842).